A 310-amino-acid chain; its full sequence is Phosphoribosylaminoimidazole-succinocarboxamide synthase (310 aa).

The protein belongs to the SAICAR synthetase family.

It carries out the reaction 5-amino-1-(5-phospho-D-ribosyl)imidazole-4-carboxylate + L-aspartate + ATP = (2S)-2-[5-amino-1-(5-phospho-beta-D-ribosyl)imidazole-4-carboxamido]succinate + ADP + phosphate + 2 H(+). It functions in the pathway purine metabolism; IMP biosynthesis via de novo pathway; 5-amino-1-(5-phospho-D-ribosyl)imidazole-4-carboxamide from 5-amino-1-(5-phospho-D-ribosyl)imidazole-4-carboxylate: step 1/2. This is Phosphoribosylaminoimidazole-succinocarboxamide synthase from Xanthomonas axonopodis pv. citri (strain 306).